Here is a 61-residue protein sequence, read N- to C-terminus: Large ribosomal subunit protein bL32 (61 aa).

Residues 1–16 are compositionally biased toward basic residues; sequence MAVPKRKTSPSKRGMR. Residues 1-41 are disordered; it reads MAVPKRKTSPSKRGMRRSADALKASTYVEDKNSGELRRPHH. Residues 28-41 are compositionally biased toward basic and acidic residues; that stretch reads VEDKNSGELRRPHH.

This sequence belongs to the bacterial ribosomal protein bL32 family.

In Rhizobium rhizogenes (strain K84 / ATCC BAA-868) (Agrobacterium radiobacter), this protein is Large ribosomal subunit protein bL32.